The following is a 361-amino-acid chain: UPF0283 membrane protein mlr0776 (361 aa).

The disordered stretch occupies residues 1-33 (MTAPRKPAAFRIEPEAAPTQETPKARQAELSRK). A compositionally biased stretch (basic and acidic residues) spans 23 to 32 (PKARQAELSR). A run of 2 helical transmembrane segments spans residues 73–93 (LFGSIFFGAIGVLVSLAVGLW) and 108–128 (LGWLAAGMAAIAVLALVVILI).

The protein belongs to the UPF0283 family.

The protein localises to the cell inner membrane. The protein is UPF0283 membrane protein mlr0776 of Mesorhizobium japonicum (strain LMG 29417 / CECT 9101 / MAFF 303099) (Mesorhizobium loti (strain MAFF 303099)).